The following is a 325-amino-acid chain: BTB/POZ domain-containing protein KCTD12 (325 aa).

Positions 1 to 28 (MALADSTRGLPNGGGGGGGSGSSSSSAE) are disordered. A2 carries the N-acetylalanine modification. A compositionally biased stretch (gly residues) spans 11–21 (PNGGGGGGGSG). Y119 bears the Phosphotyrosine mark. A disordered region spans residues 129 to 202 (LGAPQQPGPG…PLLTPSQSLD (74 aa)). S151, S171, and S185 each carry phosphoserine. Residue T196 is modified to Phosphothreonine. S200 is modified (phosphoserine).

As to quaternary structure, interacts as a tetramer with GABBR1 and GABBR2. In terms of tissue distribution, present in a variety of fetal organs, with highest expression levels in the cochlea and brain and, in stark contrast, is detected only at extremely low levels in adult organs, such as brain and lung.

It is found in the presynaptic cell membrane. The protein localises to the postsynaptic cell membrane. In terms of biological role, auxiliary subunit of GABA-B receptors that determine the pharmacology and kinetics of the receptor response. Increases agonist potency and markedly alter the G-protein signaling of the receptors by accelerating onset and promoting desensitization. The polypeptide is BTB/POZ domain-containing protein KCTD12 (KCTD12) (Homo sapiens (Human)).